Here is a 424-residue protein sequence, read N- to C-terminus: Poly-cysteine and histidine-tailed protein (424 aa).

A signal peptide spans 1-17 (MAFSTIVVLFVAAVGFG). N-linked (GlcNAc...) asparagine glycosylation is present at Asn-291. Residues 372 to 390 (VGGKKQQKDQPESEKKAEN) are compositionally biased toward basic and acidic residues. A disordered region spans residues 372–424 (VGGKKQQKDQPESEKKAENMPETTGNASHHQHRHHHGDSSSESHEQHHHHHHH). Asn-397 is a glycosylation site (N-linked (GlcNAc...) asparagine).

Glycosylated. As to expression, expressed in larval tissues like cuticle, hypodermis and muscle (at protein level). Note=Not excreted into striated muscle fibers or nurse cell.

It is found in the secreted. In terms of biological role, binds iron and zinc. May bind nickel. This chain is Poly-cysteine and histidine-tailed protein, found in Trichinella spiralis (Trichina worm).